The primary structure comprises 366 residues: Cobalt-precorrin-5B C(1)-methyltransferase (366 aa).

The protein belongs to the CbiD family.

The catalysed reaction is Co-precorrin-5B + S-adenosyl-L-methionine = Co-precorrin-6A + S-adenosyl-L-homocysteine. It functions in the pathway cofactor biosynthesis; adenosylcobalamin biosynthesis; cob(II)yrinate a,c-diamide from sirohydrochlorin (anaerobic route): step 6/10. Functionally, catalyzes the methylation of C-1 in cobalt-precorrin-5B to form cobalt-precorrin-6A. The chain is Cobalt-precorrin-5B C(1)-methyltransferase from Methanococcus maripaludis (strain C7 / ATCC BAA-1331).